A 428-amino-acid polypeptide reads, in one-letter code: Adenosylhomocysteinase (428 aa).

Positions 62, 134, and 159 each coordinate substrate. 160-162 serves as a coordination point for NAD(+); sequence TTT. Lysine 189 and aspartate 193 together coordinate substrate. NAD(+)-binding positions include asparagine 194, 223-228, glutamate 246, asparagine 281, 302-304, and asparagine 349; these read GYGWCG and SGH.

The protein belongs to the adenosylhomocysteinase family. The cofactor is NAD(+).

The protein resides in the cytoplasm. The enzyme catalyses S-adenosyl-L-homocysteine + H2O = L-homocysteine + adenosine. It functions in the pathway amino-acid biosynthesis; L-homocysteine biosynthesis; L-homocysteine from S-adenosyl-L-homocysteine: step 1/1. In terms of biological role, may play a key role in the regulation of the intracellular concentration of adenosylhomocysteine. This is Adenosylhomocysteinase from Gloeobacter violaceus (strain ATCC 29082 / PCC 7421).